The sequence spans 77 residues: Conotoxin King-Kong 1 (77 aa).

Positions 1–22 (MKLTCMMIVAVLFLTAWTFATA) are cleaved as a signal peptide. Positions 23–49 (DDSSNGLENLFSKAHHEMKNPEASKLN) are excised as a propeptide. 3 disulfides stabilise this stretch: cysteine 52–cysteine 67, cysteine 59–cysteine 71, and cysteine 66–cysteine 76. The residue at position 61 (methionine 61) is a Methionine sulfoxide; partial.

The protein belongs to the conotoxin O1 superfamily. In terms of tissue distribution, expressed by the venom duct.

The protein localises to the secreted. This chain is Conotoxin King-Kong 1, found in Conus textile (Cloth-of-gold cone).